A 310-amino-acid chain; its full sequence is Cytosolic Fe-S cluster assembly factor Nubp1 homolog (310 aa).

Residues Cys-8, Cys-22, Cys-25, and Cys-31 each coordinate [4Fe-4S] cluster. Residue 62-69 participates in ATP binding; that stretch reads GKGGVGKS. [4Fe-4S] cluster-binding residues include Cys-239 and Cys-242.

Belongs to the Mrp/NBP35 ATP-binding proteins family. NUBP1/NBP35 subfamily. As to quaternary structure, heterotetramer of 2 Nubp1 and 2 Nubp2 chains. [4Fe-4S] cluster is required as a cofactor.

It is found in the cytoplasm. In terms of biological role, component of the cytosolic iron-sulfur (Fe/S) protein assembly (CIA) machinery. Required for maturation of extramitochondrial Fe-S proteins. The Nubp1-Nubp2 heterotetramer forms a Fe-S scaffold complex, mediating the de novo assembly of an Fe-S cluster and its transfer to target apoproteins. The protein is Cytosolic Fe-S cluster assembly factor Nubp1 homolog of Drosophila ananassae (Fruit fly).